The sequence spans 618 residues: Serine--tRNA ligase, cytoplasmic (618 aa).

417-419 (TSE) serves as a coordination point for L-serine. 448–450 (RTE) provides a ligand contact to ATP. Glu-472 serves as a coordination point for L-serine. 536–539 (EVSS) lines the ATP pocket. Position 570 (Ser-570) interacts with L-serine.

This sequence belongs to the class-II aminoacyl-tRNA synthetase family. Type-1 seryl-tRNA synthetase subfamily. As to quaternary structure, homodimer. The tRNA molecule binds across the dimer.

It is found in the cytoplasm. It carries out the reaction tRNA(Ser) + L-serine + ATP = L-seryl-tRNA(Ser) + AMP + diphosphate + H(+). It catalyses the reaction tRNA(Sec) + L-serine + ATP = L-seryl-tRNA(Sec) + AMP + diphosphate + H(+). Its pathway is aminoacyl-tRNA biosynthesis; selenocysteinyl-tRNA(Sec) biosynthesis; L-seryl-tRNA(Sec) from L-serine and tRNA(Sec): step 1/1. Catalyzes the attachment of serine to tRNA(Ser). Is also able to aminoacylate tRNA(Sec) with serine, to form the misacylated tRNA L-seryl-tRNA(Sec), which will be further converted into selenocysteinyl-tRNA(Sec). The protein is Serine--tRNA ligase, cytoplasmic of Plasmodium falciparum (isolate 3D7).